The chain runs to 278 residues: Gap junction delta-3 protein (278 aa).

At 1–24 the chain is on the cytoplasmic side; sequence MGEWAFLGSLLDAVQLQSPLVGRL. Residues 25–45 traverse the membrane as a helical segment; sequence WLVIMLIFRILVLATVGGAVF. Over 46 to 76 the chain is Extracellular; the sequence is EDEQEEFVCNTLQPGCRQTCYDRAFPVSHYR. A helical transmembrane segment spans residues 77–97; the sequence is FWLFHILLLSAPPVLFVIYSM. The Cytoplasmic segment spans residues 98–136; the sequence is HQASKEAGGAQLAPPCARGRAEAPCSPCALRARRARRCY. The chain crosses the membrane as a helical span at residues 137-157; sequence LLSVALRLLAELAFLGGQALL. The Extracellular portion of the chain corresponds to 158–188; the sequence is YGFRVDPHYACAGPPCPHTVDCFVSRPTEKT. The helical transmembrane segment at 189-209 threads the bilayer; it reads VFVVFYFAVGLLSALLSVAEL. Topologically, residues 210 to 278 are cytoplasmic; sequence GHLLWKGRQR…LATVRQDLAI (69 aa). The interval 223-278 is disordered; it reads LPPPPPSPSLPSQRGDPDPFGPPAYAHRSPAGDSEGEGGSGHSKASLATVRQDLAI.

This sequence belongs to the connexin family. Delta-type subfamily. In terms of assembly, a connexon is composed of a hexamer of connexins.

It localises to the cell membrane. It is found in the cell junction. Its subcellular location is the gap junction. Its function is as follows. One gap junction consists of a cluster of closely packed pairs of transmembrane channels, the connexons, through which materials of low MW diffuse from one cell to a neighboring cell. This Mus musculus (Mouse) protein is Gap junction delta-3 protein (Gjd3).